We begin with the raw amino-acid sequence, 369 residues long: Cyanuric acid amidohydrolase (369 aa).

Residues 1–100 (MPRRAEILRL…HWLVIAAREA (100 aa)) are RU A. Substrate contacts are provided by residues Arg53 and 81–82 (SG). The interval 106–242 (ALAVGQARTP…HEVVVMGMSP (137 aa)) is RU B. Lys155 is a catalytic residue. Residues Arg187 and 225–226 (SA) each bind substrate. Residue Ser225 is the Nucleophile of the active site. The segment at 248–369 (LVIDHAVMAD…ARRSGAAGPA (122 aa)) is RU C. Glu296 provides a ligand contact to Mg(2+). Substrate contacts are provided by residues Arg323 and 342–343 (SG). Positions 345, 348, 349, 350, and 353 each coordinate Mg(2+).

Belongs to the cyclic amide hydrolase (CyAH) family. As to quaternary structure, homotetramer.

The enzyme catalyses cyanurate + H2O = 1-carboxybiuret + H(+). The protein operates within xenobiotic degradation; atrazine degradation; biuret from cyanurate: step 1/1. Its activity is regulated as follows. Inhibited by barbituric acid. In terms of biological role, responsible for the hydrolysis of cyanuric acid, an intermediate formed during catabolism of s-triazine based compounds in herbicides such as atrazine and polymers such as melamine. Catalyzes the hydrolytic opening of the s-triazine ring of cyanuric acid (2,4,6-trihydroxy-s-triazine) to yield carbon dioxide and carboxybiuret, which spontaneously decarboxylates to biuret. In Methylobacterium sp. (strain 4-46), this protein is Cyanuric acid amidohydrolase.